The following is a 266-amino-acid chain: MNEPHLLIDAGNSRIKWALADAQRTLVETGAFGHTRDGGADPDWSTLPRPRGAWISNVAGADVAARLDTLLDARWPGLPRTTIRSRHTQCGVTNGYTTPDQLGSDRWAGLIGAHAAFPGEHLLIATFGTATTLEALRADGRFTGGLIAPGWALMMRALGTHTAQLPTLTTDIASGLLAGAQAEPFQVDTPRSLSAGCLYAQAGLIERAWRDLADAWQAPVRLVLAGGAADDVARALTLPHTRHDALILSGLALIAAEAAAATAAQA.

An ATP-binding site is contributed by 9 to 16 (DAGNSRIK). Substrate contacts are provided by residues Tyr-96 and 103-106 (GSDR). Residue Asp-105 is the Proton acceptor of the active site. Thr-129 is an ATP binding site. Thr-189 lines the substrate pocket.

This sequence belongs to the type III pantothenate kinase family. As to quaternary structure, homodimer. Requires NH4(+) as cofactor. It depends on K(+) as a cofactor.

It is found in the cytoplasm. The enzyme catalyses (R)-pantothenate + ATP = (R)-4'-phosphopantothenate + ADP + H(+). It functions in the pathway cofactor biosynthesis; coenzyme A biosynthesis; CoA from (R)-pantothenate: step 1/5. Its function is as follows. Catalyzes the phosphorylation of pantothenate (Pan), the first step in CoA biosynthesis. This is Type III pantothenate kinase from Burkholderia lata (strain ATCC 17760 / DSM 23089 / LMG 22485 / NCIMB 9086 / R18194 / 383).